The primary structure comprises 289 residues: Phosphatidylserine decarboxylase proenzyme (289 aa).

Catalysis depends on charge relay system; for autoendoproteolytic cleavage activity residues aspartate 89, histidine 146, and serine 252. The active-site Schiff-base intermediate with substrate; via pyruvic acid; for decarboxylase activity is the serine 252. The residue at position 252 (serine 252) is a Pyruvic acid (Ser); by autocatalysis.

The protein belongs to the phosphatidylserine decarboxylase family. PSD-B subfamily. Prokaryotic type I sub-subfamily. Heterodimer of a large membrane-associated beta subunit and a small pyruvoyl-containing alpha subunit. It depends on pyruvate as a cofactor. Is synthesized initially as an inactive proenzyme. Formation of the active enzyme involves a self-maturation process in which the active site pyruvoyl group is generated from an internal serine residue via an autocatalytic post-translational modification. Two non-identical subunits are generated from the proenzyme in this reaction, and the pyruvate is formed at the N-terminus of the alpha chain, which is derived from the carboxyl end of the proenzyme. The autoendoproteolytic cleavage occurs by a canonical serine protease mechanism, in which the side chain hydroxyl group of the serine supplies its oxygen atom to form the C-terminus of the beta chain, while the remainder of the serine residue undergoes an oxidative deamination to produce ammonia and the pyruvoyl prosthetic group on the alpha chain. During this reaction, the Ser that is part of the protease active site of the proenzyme becomes the pyruvoyl prosthetic group, which constitutes an essential element of the active site of the mature decarboxylase.

The protein resides in the cell membrane. It catalyses the reaction a 1,2-diacyl-sn-glycero-3-phospho-L-serine + H(+) = a 1,2-diacyl-sn-glycero-3-phosphoethanolamine + CO2. It functions in the pathway phospholipid metabolism; phosphatidylethanolamine biosynthesis; phosphatidylethanolamine from CDP-diacylglycerol: step 2/2. Functionally, catalyzes the formation of phosphatidylethanolamine (PtdEtn) from phosphatidylserine (PtdSer). This is Phosphatidylserine decarboxylase proenzyme from Shewanella sp. (strain W3-18-1).